The following is a 47-amino-acid chain: Protein YqgG (47 aa).

The sequence is that of Protein YqgG from Escherichia coli (strain K12).